The following is a 740-amino-acid chain: Catalase-peroxidase (740 aa).

The signal sequence occupies residues Met1–Ala27. The tryptophyl-tyrosyl-methioninium (Trp-Tyr) (with M-254) cross-link spans Trp106–Tyr228. The active-site Proton acceptor is His107. The tryptophyl-tyrosyl-methioninium (Tyr-Met) (with W-106) cross-link spans Tyr228–Met254. A heme b-binding site is contributed by His269.

The protein belongs to the peroxidase family. Peroxidase/catalase subfamily. As to quaternary structure, homodimer or homotetramer. Requires heme b as cofactor. Formation of the three residue Trp-Tyr-Met cross-link is important for the catalase, but not the peroxidase activity of the enzyme.

It carries out the reaction H2O2 + AH2 = A + 2 H2O. The enzyme catalyses 2 H2O2 = O2 + 2 H2O. In terms of biological role, bifunctional enzyme with both catalase and broad-spectrum peroxidase activity. In Colwellia psychrerythraea (strain 34H / ATCC BAA-681) (Vibrio psychroerythus), this protein is Catalase-peroxidase.